We begin with the raw amino-acid sequence, 203 residues long: TATA-binding protein 2 (203 aa).

2 tandem repeats follow at residues 28–104 (LQNI…ARII) and 118–195 (IQNI…YPVL).

The protein belongs to the TBP family. As to quaternary structure, belongs to the TFIID complex together with the TBP-associated factors (TAFs). Binds DNA as monomer. Interacts with RF2A and TFIIB. Interacts with CWZF7.

It localises to the nucleus. General transcription factor that functions at the core of the DNA-binding multiprotein factor TFIID. Binding of TFIID to the TATA box is the initial transcriptional step of the pre-initiation complex (PIC), playing a role in the activation of eukaryotic genes transcribed by RNA polymerase II. This is TATA-binding protein 2 (TBP2) from Oryza sativa subsp. japonica (Rice).